A 198-amino-acid chain; its full sequence is dTTP/UTP pyrophosphatase (198 aa).

The Proton acceptor role is filled by Asp-69.

This sequence belongs to the Maf family. YhdE subfamily. The cofactor is a divalent metal cation.

The protein resides in the cytoplasm. It catalyses the reaction dTTP + H2O = dTMP + diphosphate + H(+). The catalysed reaction is UTP + H2O = UMP + diphosphate + H(+). In terms of biological role, nucleoside triphosphate pyrophosphatase that hydrolyzes dTTP and UTP. May have a dual role in cell division arrest and in preventing the incorporation of modified nucleotides into cellular nucleic acids. This Idiomarina loihiensis (strain ATCC BAA-735 / DSM 15497 / L2-TR) protein is dTTP/UTP pyrophosphatase.